The sequence spans 1551 residues: Pentafunctional AROM polypeptide 2 (1551 aa).

Residues M1–K379 form a 3-dehydroquinate synthase region. NAD(+) is bound by residues D42–N44, E80–K83, G111–V113, and D116. R127 lines the 7-phospho-2-dehydro-3-deoxy-D-arabino-heptonate pocket. T136–T137 provides a ligand contact to NAD(+). 2 residues coordinate 7-phospho-2-dehydro-3-deoxy-D-arabino-heptonate: D143 and K149. An NAD(+)-binding site is contributed by K158. N159 is a 7-phospho-2-dehydro-3-deoxy-D-arabino-heptonate binding site. NAD(+)-binding positions include F176–T179 and N187. E191 provides a ligand contact to Zn(2+). 7-phospho-2-dehydro-3-deoxy-D-arabino-heptonate is bound by residues E191 to K194 and K243. E253 (proton acceptor; for 3-dehydroquinate synthase activity) is an active-site residue. Residues R257 to N261 and H264 each bind 7-phospho-2-dehydro-3-deoxy-D-arabino-heptonate. H264 contacts Zn(2+). The active-site Proton acceptor; for 3-dehydroquinate synthase activity is H268. Residues H280 and K351 each coordinate 7-phospho-2-dehydro-3-deoxy-D-arabino-heptonate. Position 280 (H280) interacts with Zn(2+). Residues V392–A835 are EPSP synthase. The shikimate kinase stretch occupies residues D854–T1044. G861–T868 contributes to the ATP binding site. The segment at L1045–E1258 is 3-dehydroquinase. The active-site Proton acceptor; for 3-dehydroquinate dehydratase activity is the H1162. The Schiff-base intermediate with substrate; for 3-dehydroquinate dehydratase activity role is filled by K1191. The segment at E1271–E1551 is shikimate dehydrogenase.

In the N-terminal section; belongs to the sugar phosphate cyclases superfamily. Dehydroquinate synthase family. It in the 2nd section; belongs to the EPSP synthase family. This sequence in the 3rd section; belongs to the shikimate kinase family. The protein in the 4th section; belongs to the type-I 3-dehydroquinase family. In the C-terminal section; belongs to the shikimate dehydrogenase family. In terms of assembly, homodimer. It depends on Zn(2+) as a cofactor.

It localises to the cytoplasm. It catalyses the reaction 7-phospho-2-dehydro-3-deoxy-D-arabino-heptonate = 3-dehydroquinate + phosphate. The catalysed reaction is 3-dehydroquinate = 3-dehydroshikimate + H2O. It carries out the reaction shikimate + NADP(+) = 3-dehydroshikimate + NADPH + H(+). The enzyme catalyses shikimate + ATP = 3-phosphoshikimate + ADP + H(+). It catalyses the reaction 3-phosphoshikimate + phosphoenolpyruvate = 5-O-(1-carboxyvinyl)-3-phosphoshikimate + phosphate. The protein operates within metabolic intermediate biosynthesis; chorismate biosynthesis; chorismate from D-erythrose 4-phosphate and phosphoenolpyruvate: step 2/7. It participates in metabolic intermediate biosynthesis; chorismate biosynthesis; chorismate from D-erythrose 4-phosphate and phosphoenolpyruvate: step 3/7. Its pathway is metabolic intermediate biosynthesis; chorismate biosynthesis; chorismate from D-erythrose 4-phosphate and phosphoenolpyruvate: step 4/7. It functions in the pathway metabolic intermediate biosynthesis; chorismate biosynthesis; chorismate from D-erythrose 4-phosphate and phosphoenolpyruvate: step 5/7. The protein operates within metabolic intermediate biosynthesis; chorismate biosynthesis; chorismate from D-erythrose 4-phosphate and phosphoenolpyruvate: step 6/7. In terms of biological role, the AROM polypeptide catalyzes 5 consecutive enzymatic reactions in prechorismate polyaromatic amino acid biosynthesis. This chain is Pentafunctional AROM polypeptide 2, found in Lodderomyces elongisporus (strain ATCC 11503 / CBS 2605 / JCM 1781 / NBRC 1676 / NRRL YB-4239) (Yeast).